Consider the following 453-residue polypeptide: Growth/differentiation factor 9 (453 aa).

Positions 1–25 (MALPNKFFLWFCCFAWLCFPISLDS) are cleaved as a signal peptide. A propeptide spanning residues 26–318 (QPSRGEAQIV…EGVRLSRHRR (293 aa)) is cleaved from the precursor. Residues Asn-106, Asn-163, Asn-236, Asn-255, and Asn-269 are each glycosylated (N-linked (GlcNAc...) asparagine). Residues 281-300 (SLHPKRKPSQDPDQKRGLSA) are disordered. The N-linked (GlcNAc...) asparagine glycan is linked to Asn-337. Cystine bridges form between Cys-352-Cys-418, Cys-381-Cys-450, and Cys-385-Cys-452.

The protein belongs to the TGF-beta family. Homodimer or heterodimer (Potential). But, in contrast to other members of this family, cannot be disulfide-linked. In terms of processing, phosphorylated; phosphorylation is critical for GDF9 function.

The protein resides in the secreted. Its function is as follows. Required for ovarian folliculogenesis. The chain is Growth/differentiation factor 9 (GDF9) from Bos taurus (Bovine).